Here is a 378-residue protein sequence, read N- to C-terminus: MHFPGHSSKKEESAQAALTKLNSWFPTTKNPVIISAPMYLIANGTLAAEVSKAGGIGFVAGGSDFRPGSSHLTALSTELASARSRLGLTDRPLTPLPGIGVGLILTHTISVPYVTDTVLPILIEHSPQAVWLFANDPDFEASSEPGAKGTAKQIIEALHASGFVVFFQVGTVKDARKAAADGADVIVAQGIDAGGHQLATGSGIVSLVPEVRDMLDREFKEREVVVVAAGGVADGRGVVGALGLGAEGVVLGTRFTVAVEASTPEFRRKVILETNDGGLNTVKSHFHDQINCNTIWHNVYDGRAVRNASYDDHAAGVPFEENHKKFKEAASSGDNSRAVTWSGTAVGLIKDQRPAGDIVRELREEAKERIKKIQAFAA.

A propeptide spanning residues 1–15 (MHFPGHSSKKEESAQ) is cleaved from the precursor. 37-39 (PMY) serves as a coordination point for FMN. His-196 functions as the Proton acceptor in the catalytic mechanism. Substrate is bound at residue His-196. Residues 229–231 (AGG) and 252–253 (GT) contribute to the FMN site.

This sequence belongs to the nitronate monooxygenase family. NMO class II subfamily. Homodimer. Requires FMN as cofactor.

The catalysed reaction is ethylnitronate + O2 = chemical entity + acetaldehyde + nitrite + H(+). In terms of biological role, catalyzes the oxidation of alkyl nitronates to produce the corresponding carbonyl compounds and nitrites. Anionic forms of nitroalkanes are much better substrates than are neutral forms. This chain is Nitronate monooxygenase (ncd-2), found in Neurospora crassa (strain ATCC 24698 / 74-OR23-1A / CBS 708.71 / DSM 1257 / FGSC 987).